We begin with the raw amino-acid sequence, 260 residues long: Thrombin-like enzyme acutobin (260 aa).

The signal sequence occupies residues 1 to 18; the sequence is MVLIRVLANLLILQLSYA. Positions 19–24 are excised as a propeptide; that stretch reads QKSSEL. The Peptidase S1 domain maps to 25-251; it reads VIGGVECDIN…YNDWIRSITA (227 aa). Intrachain disulfides connect cysteine 31–cysteine 165, cysteine 52–cysteine 68, cysteine 102–cysteine 258, cysteine 144–cysteine 212, cysteine 176–cysteine 191, and cysteine 202–cysteine 227. Histidine 67 functions as the Charge relay system in the catalytic mechanism. 2 N-linked (GlcNAc...) asparagine glycosylation sites follow: asparagine 101 and asparagine 105. Residue aspartate 112 is the Charge relay system of the active site. Residue asparagine 124 is glycosylated (N-linked (GlcNAc...) asparagine). Serine 206 serves as the catalytic Charge relay system. Residue asparagine 253 is glycosylated (N-linked (GlcNAc...) asparagine).

Belongs to the peptidase S1 family. Snake venom subfamily. Monomer. In terms of processing, N-glycosylated. In terms of tissue distribution, expressed by the venom gland.

Its subcellular location is the secreted. In terms of biological role, thrombin-like snake venom serine protease that coagulates human fibrinogen by hydrolysis of the alpha chains (FGA). The chain is Thrombin-like enzyme acutobin from Deinagkistrodon acutus (Hundred-pace snake).